The chain runs to 361 residues: Probable G-protein coupled receptor 25 (361 aa).

Topologically, residues 1 to 39 (MAPTEPWSPSPGSAPWDYSGLDGLEELELCPAGDLPYGY) are extracellular. The helical transmembrane segment at 40–60 (VYIPALYLAAFAVGLLGNAFV) threads the bilayer. Over 61-75 (VWLLAGRRGPRRLVD) the chain is Cytoplasmic. A helical membrane pass occupies residues 76 to 96 (TFVLHLAAADLGFVLTLPLWA). Residues 97-126 (AAAALGGRWPFGDGLCKLSSFALAGTRCAG) lie on the Extracellular side of the membrane. Residues 127–147 (ALLLAGMSVDRYLAVVKLLEA) traverse the membrane as a helical segment. Residues 148–155 (RPLRTPRC) lie on the Cytoplasmic side of the membrane. Residues 156–176 (ALASCCGVWAVALLAGLPSLV) form a helical membrane-spanning segment. The Extracellular segment spans residues 177–200 (YRGLQPLPGGQDSQCGEEPSHAFQ). A helical membrane pass occupies residues 201–220 (GLSLLLLLLTFVLPLVVTLF). Topologically, residues 221 to 242 (CYCRISRRLRRPPHVGRARRNS) are cytoplasmic. A helical transmembrane segment spans residues 243–263 (LRIIFAIESTFVGSWLPFSAL). Residues 264–289 (RAVFHLARLGALPLPCPLLLALRWGL) lie on the Extracellular side of the membrane. The chain crosses the membrane as a helical span at residues 290 to 310 (TIATCLAFVNSCANPLIYLLL). The Cytoplasmic segment spans residues 311–361 (DRSFRARALDGACGRTGRLARRISSASSLSRDDSSVFRCRAQAANTASASW).

It belongs to the G-protein coupled receptor 1 family.

The protein resides in the cell membrane. In terms of biological role, orphan receptor. This Homo sapiens (Human) protein is Probable G-protein coupled receptor 25 (GPR25).